A 443-amino-acid chain; its full sequence is UDP-N-acetylmuramate--L-alanine ligase (443 aa).

110 to 116 (GAHGKTS) provides a ligand contact to ATP.

It belongs to the MurCDEF family.

The protein resides in the cytoplasm. It carries out the reaction UDP-N-acetyl-alpha-D-muramate + L-alanine + ATP = UDP-N-acetyl-alpha-D-muramoyl-L-alanine + ADP + phosphate + H(+). The protein operates within cell wall biogenesis; peptidoglycan biosynthesis. In terms of biological role, cell wall formation. The polypeptide is UDP-N-acetylmuramate--L-alanine ligase (Lactococcus lactis subsp. cremoris (strain MG1363)).